A 544-amino-acid polypeptide reads, in one-letter code: uncharacterized protein (544 aa).

The N-terminal stretch at 1–34 (MIARRMLCARPWGPSCVVCALCGALAALVPAVGA) is a signal peptide. The segment at 38 to 69 (AVPAPGTPAPPAHTASEAVPPAPEPRAEGEQP) is disordered.

It belongs to the TP096X family.

This is an uncharacterized protein from Treponema pallidum (strain Nichols).